The primary structure comprises 217 residues: Replication-associated protein A (217 aa).

Low complexity predominate over residues 1–17; it reads MRAPASSAASNRPGPSN. The interval 1–22 is disordered; the sequence is MRAPASSAASNRPGPSNHPTPR. The region spanning 22–125 is the CRESS-DNA virus Rep endonuclease domain; it reads RWNSKQFFLT…NGDSDEMGEL (104 aa). The RCR-1 signature appears at 29–32; the sequence is FLTY. A divalent metal cation is bound by residues E63, H71, and H73. The short motif at 71–73 is the RCR-2 element; that stretch reads HLH. Residue Y111 is the For DNA cleavage activity of the active site. The RCR-3 motif lies at 111–114; the sequence is YISK. The interval 176 to 188 is oligomerization; that stretch reads SAAALFTEPPPVY.

This sequence belongs to the geminiviridae Rep protein family. Homooligomer. Part of the C- and V-complexes which are RepA-Rep-DNA complexes involved in the c-sense and v-sense transcription.

Its subcellular location is the host nucleus. The protein localises to the host cytoplasm. Functionally, implicated in enhancement of V-sense gene expression. Acts a an inhibitor of C-sense gene transcription. The sequence is that of Replication-associated protein A from Miscanthus sacchariflorus (MiSV).